A 198-amino-acid chain; its full sequence is 5'-deoxynucleotidase hdd1 (198 aa).

The region spanning 38–144 (IADHMYRMGI…VKDIDKFEMI (107 aa)) is the HD domain. His41, His69, Asp70, Glu73, Asp78, Ile79, and Asp139 together coordinate a divalent metal cation.

It belongs to the HDDC2 family. Homodimer. The cofactor is Mn(2+). Co(2+) serves as cofactor. Requires Mg(2+) as cofactor.

The protein resides in the cytoplasm. The protein localises to the nucleus. It carries out the reaction a 2'-deoxyribonucleoside 5'-phosphate + H2O = a 2'-deoxyribonucleoside + phosphate. Its function is as follows. Catalyzes the dephosphorylation of the nucleoside 5'-monophosphates deoxyadenosine monophosphate (dAMP), deoxycytidine monophosphate (dCMP), deoxyguanosine monophosphate (dGMP) and deoxythymidine monophosphate (dTMP). The polypeptide is 5'-deoxynucleotidase hdd1 (Schizosaccharomyces pombe (strain 972 / ATCC 24843) (Fission yeast)).